A 157-amino-acid polypeptide reads, in one-letter code: Pyruvoyl-dependent arginine decarboxylase 2 (157 aa).

At Ser-43 the chain carries Pyruvic acid (Ser).

Belongs to the PdaD family. It depends on pyruvate as a cofactor.

It catalyses the reaction L-arginine + H(+) = agmatine + CO2. The polypeptide is Pyruvoyl-dependent arginine decarboxylase 2 (pdaD2) (Archaeoglobus fulgidus (strain ATCC 49558 / DSM 4304 / JCM 9628 / NBRC 100126 / VC-16)).